Here is a 227-residue protein sequence, read N- to C-terminus: AN1-type zinc finger protein 3 (227 aa).

The A20-type zinc-finger motif lies at 12-44; sequence PSLPPRCPCGFWGSSKTMNLCSKCFADFQKKQP. Residues cysteine 18, cysteine 20, cysteine 32, and cysteine 35 each coordinate Zn(2+). 2 disordered regions span residues 41-99 and 113-151; these read KKQP…TEEC and PTKR…RSKQ. Composition is skewed to low complexity over residues 49-59 and 66-77; these read TPSTSNSQSDL and SDNNNTSVTTPT. 2 stretches are compositionally biased toward polar residues: residues 78–96 and 113–127; these read LSPS…SPST and PTKR…SENE. The span at 135-148 shows a compositional bias: basic and acidic residues; sequence RLVENPERPEESGR. The AN1-type zinc-finger motif lies at 151–200; the sequence is QKSRRRCFQCQTKLELVQQELGSCRCGYVFCMLHRLPEQHDCTFDHMGRG. Zn(2+) is bound by residues cysteine 157, cysteine 160, cysteine 174, cysteine 176, cysteine 181, histidine 184, histidine 190, and cysteine 192.

As to expression, expressed in testis.

In Mus musculus (Mouse), this protein is AN1-type zinc finger protein 3 (Zfand3).